Here is a 262-residue protein sequence, read N- to C-terminus: MIDSTAVIHPTSIVEDGAVIGAGVQIGPFCVIGANVSIGEGTTLKSHIVVNGHTRIGKDNTVYQFASIGEANQDLKYAGEPTRVEIGDRNRIRESVTIHRGTVQSDGVTRVGDDNLLMVNAHVAHDCVVGNHCILANNATLAGHVIVDDYAIIGGMTAVHQFCTIGAHVMVGGCSGVAQDVPPYVIAQGNHATPFGINLIGLQRRGFSKEALHAIRAAYKLLYRSGKTLDEVKPEIADIAQAHPEVQPFYDFFARSTRGLIR.

The protein belongs to the transferase hexapeptide repeat family. LpxA subfamily. In terms of assembly, homotrimer.

The protein resides in the cytoplasm. The enzyme catalyses a (3R)-hydroxyacyl-[ACP] + UDP-N-acetyl-alpha-D-glucosamine = a UDP-3-O-[(3R)-3-hydroxyacyl]-N-acetyl-alpha-D-glucosamine + holo-[ACP]. It participates in glycolipid biosynthesis; lipid IV(A) biosynthesis; lipid IV(A) from (3R)-3-hydroxytetradecanoyl-[acyl-carrier-protein] and UDP-N-acetyl-alpha-D-glucosamine: step 1/6. Involved in the biosynthesis of lipid A, a phosphorylated glycolipid that anchors the lipopolysaccharide to the outer membrane of the cell. The polypeptide is Acyl-[acyl-carrier-protein]--UDP-N-acetylglucosamine O-acyltransferase (Erwinia tasmaniensis (strain DSM 17950 / CFBP 7177 / CIP 109463 / NCPPB 4357 / Et1/99)).